The primary structure comprises 89 residues: Putative regulatory protein CLH_1161 (89 aa).

It belongs to the RemA family.

In Clostridium botulinum (strain Alaska E43 / Type E3), this protein is Putative regulatory protein CLH_1161.